We begin with the raw amino-acid sequence, 86 residues long: Small ribosomal subunit protein bS20 (86 aa).

The span at 1–11 shows a compositional bias: basic residues; the sequence is MANIKSAKKRA. The segment at 1 to 26 is disordered; the sequence is MANIKSAKKRAITSEKNRQHNASRRS.

It belongs to the bacterial ribosomal protein bS20 family.

In terms of biological role, binds directly to 16S ribosomal RNA. The protein is Small ribosomal subunit protein bS20 of Pseudoalteromonas translucida (strain TAC 125).